The sequence spans 1194 residues: IQ motif and SEC7 domain-containing protein 3 (1194 aa).

The stretch at 20-56 forms a coiled coil; the sequence is AIVQNQQSLIHTQRQRIDELERRLDELSAENRSLWEH. 2 disordered regions span residues 62–149 and 229–272; these read AQPP…EKER and GRPS…QQPA. Over residues 63–78 the composition is skewed to pro residues; sequence QPPPGLVPPPSAPLPA. The segment covering 79-92 has biased composition (low complexity); the sequence is PAATAPAATAAQEP. Positions 122-133 are enriched in polar residues; it reads PSSRVQTPQSPH. S255 is subject to Phosphoserine. Residues 311–340 enclose the IQ domain; the sequence is SRRAACTIQTAFRQYQLSKNFEKIRNSLLE. 2 disordered regions span residues 439–471 and 515–610; these read SAGQ…QGHS and PAAV…KSAK. Low complexity-rich tracts occupy residues 561-572 and 600-610; these read VAEAVVEEAVAT and SSSSASTKSAK. An SEC7 domain is found at 646–839; that stretch reads TLSTDTLRKR…VGIYERIQQK (194 aa). The PH domain occupies 852–985; that stretch reads TKVEKSIVGM…LKESIAEVTE (134 aa). 2 disordered regions span residues 1002 to 1099 and 1137 to 1175; these read KTLS…PTPP and SSDS…HQFC. Residues 1024–1035 are compositionally biased toward basic and acidic residues; the sequence is AKREAMAGEKAT. Residues 1036–1052 are compositionally biased toward polar residues; sequence ESSGEVSIHNRLQTFQH. Composition is skewed to pro residues over residues 1064-1099 and 1159-1169; these read APSP…PTPP and PPLPPPPPPYN.

The protein belongs to the BRAG family. Interacts with DLG1 and DLG4. Interacts with GPHN. Expressed in brain. Localized to dendrites, as well as somas of neuronal cells.

It is found in the cytoplasm. Its subcellular location is the postsynaptic density. Acts as a guanine nucleotide exchange factor (GEF) for ARF1. The chain is IQ motif and SEC7 domain-containing protein 3 (Iqsec3) from Rattus norvegicus (Rat).